The primary structure comprises 376 residues: Cytochrome b (376 aa).

4 consecutive transmembrane segments (helical) span residues 28 to 48 (YGFL…FLAS), 72 to 94 (WCFR…LHIL), 107 to 127 (SWIS…IGYV), and 169 to 189 (FFVL…IHIF). 2 residues coordinate heme b: His78 and His92. His173 and His187 together coordinate heme b. His192 provides a ligand contact to a ubiquinone. Transmembrane regions (helical) follow at residues 214 to 234 (LLSL…IQSI), 274 to 294 (IPSK…LFLL), 317 to 337 (VPII…CPLP), and 340 to 360 (IFIL…LFSL).

The protein belongs to the cytochrome b family. The main subunits of complex b-c1 are: cytochrome b, cytochrome c1 and the Rieske protein. It depends on heme b as a cofactor.

It localises to the mitochondrion inner membrane. Its function is as follows. Component of the ubiquinol-cytochrome c reductase complex (complex III or cytochrome b-c1 complex) that is part of the mitochondrial respiratory chain. The b-c1 complex mediates electron transfer from ubiquinol to cytochrome c. Contributes to the generation of a proton gradient across the mitochondrial membrane that is then used for ATP synthesis. This chain is Cytochrome b (MT-CYB), found in Plasmodium berghei.